The sequence spans 297 residues: Non-homologous end-joining factor 1 (297 aa).

Residues 1-131 are globular head; the sequence is MDARLLQLPW…ATVSTVCRHL (131 aa). The segment at 220–286 is C-terminal tail; sequence PKAPTHPKEE…LTHRPPAGAS (67 aa). A disordered region spans residues 222–297; sequence APTHPKEEDT…PKKKAKGLFM (76 aa). Positions 232–255 are enriched in polar residues; that stretch reads GNSASHRPMAESSSISFEKTVPTQ. The segment covering 263-286 has biased composition (low complexity); the sequence is VSEPSQVPQSSVSCLTHRPPAGAS. The XLM signature appears at 287 to 297; the sequence is KPKKKAKGLFM. Positions 287-297 are enriched in basic residues; the sequence is KPKKKAKGLFM.

The protein belongs to the XRCC4-XLF family. XLF subfamily. Homodimer. Interacts with xrcc4; the interaction is direct and is mediated via a head-to-head interaction between N-terminal head regions. Component of the core long-range non-homologous end joining (NHEJ) complex (also named DNA-PK complex) composed of prkdc/DNA-PKcs, lig4, xrcc4, xrcc6/Ku70, xrcc5/Ku80 and nhej1/xlf.

It is found in the nucleus. In terms of biological role, DNA repair protein involved in DNA non-homologous end joining (NHEJ); required for double-strand break (DSB) repair and V(D)J recombination. It is also involved in telomere maintenance. Plays a key role in NHEJ by promoting the ligation of various mismatched and non-cohesive ends. In some studies, has been shown to associate with xrcc4 to form alternating helical filaments that bridge DNA and act like a bandage, holding together the broken DNA until it is repaired. Alternatively, it has also been shown that rather than forming filaments, a single nhej1 dimer interacts through both head domains with xrcc4 to promote the close alignment of DNA ends. The xrcc4-nhej1/xlf subcomplex binds to the DNA fragments of a DSB in a highly diffusive manner and robustly bridges two independent DNA molecules, holding the broken DNA fragments in close proximity to one other. The mobility of the bridges ensures that the ends remain accessible for further processing by other repair factors. In Xenopus laevis (African clawed frog), this protein is Non-homologous end-joining factor 1.